A 292-amino-acid polypeptide reads, in one-letter code: Diaminopimelate epimerase (292 aa).

Substrate-binding residues include Asn14 and Asn81. Cys90 (proton donor) is an active-site residue. Substrate-binding positions include 91 to 92 (GN), Asn166, Asn202, and 220 to 221 (ER). The Proton acceptor role is filled by Cys229. Residue 230–231 (GT) coordinates substrate.

This sequence belongs to the diaminopimelate epimerase family. As to quaternary structure, homodimer.

The protein localises to the cytoplasm. It carries out the reaction (2S,6S)-2,6-diaminopimelate = meso-2,6-diaminopimelate. The protein operates within amino-acid biosynthesis; L-lysine biosynthesis via DAP pathway; DL-2,6-diaminopimelate from LL-2,6-diaminopimelate: step 1/1. Catalyzes the stereoinversion of LL-2,6-diaminopimelate (L,L-DAP) to meso-diaminopimelate (meso-DAP), a precursor of L-lysine and an essential component of the bacterial peptidoglycan. This is Diaminopimelate epimerase from Rhodococcus erythropolis (strain PR4 / NBRC 100887).